The chain runs to 388 residues: Succinate--CoA ligase [ADP-forming] subunit beta (388 aa).

The 236-residue stretch at 9–244 (KEILRKYNVP…LDEEDANEIE (236 aa)) folds into the ATP-grasp domain. ATP-binding positions include lysine 46, 53–55 (GRG), glutamate 99, alanine 102, and glutamate 107. Residues asparagine 199 and aspartate 213 each contribute to the Mg(2+) site. Substrate contacts are provided by residues asparagine 264 and 321-323 (GIM).

It belongs to the succinate/malate CoA ligase beta subunit family. As to quaternary structure, heterotetramer of two alpha and two beta subunits. It depends on Mg(2+) as a cofactor.

The catalysed reaction is succinate + ATP + CoA = succinyl-CoA + ADP + phosphate. It catalyses the reaction GTP + succinate + CoA = succinyl-CoA + GDP + phosphate. It participates in carbohydrate metabolism; tricarboxylic acid cycle; succinate from succinyl-CoA (ligase route): step 1/1. In terms of biological role, succinyl-CoA synthetase functions in the citric acid cycle (TCA), coupling the hydrolysis of succinyl-CoA to the synthesis of either ATP or GTP and thus represents the only step of substrate-level phosphorylation in the TCA. The beta subunit provides nucleotide specificity of the enzyme and binds the substrate succinate, while the binding sites for coenzyme A and phosphate are found in the alpha subunit. The sequence is that of Succinate--CoA ligase [ADP-forming] subunit beta from Ralstonia nicotianae (strain ATCC BAA-1114 / GMI1000) (Ralstonia solanacearum).